A 398-amino-acid polypeptide reads, in one-letter code: 4-hydroxy-3-methylbut-2-en-1-yl diphosphate synthase (ferredoxin) (398 aa).

4 residues coordinate [4Fe-4S] cluster: Cys306, Cys309, Cys340, and Glu347.

Belongs to the IspG family. [4Fe-4S] cluster serves as cofactor.

It carries out the reaction (2E)-4-hydroxy-3-methylbut-2-enyl diphosphate + 2 oxidized [2Fe-2S]-[ferredoxin] + H2O = 2-C-methyl-D-erythritol 2,4-cyclic diphosphate + 2 reduced [2Fe-2S]-[ferredoxin] + H(+). Its pathway is isoprenoid biosynthesis; isopentenyl diphosphate biosynthesis via DXP pathway; isopentenyl diphosphate from 1-deoxy-D-xylulose 5-phosphate: step 5/6. Converts 2C-methyl-D-erythritol 2,4-cyclodiphosphate (ME-2,4cPP) into 1-hydroxy-2-methyl-2-(E)-butenyl 4-diphosphate. The chain is 4-hydroxy-3-methylbut-2-en-1-yl diphosphate synthase (ferredoxin) from Synechococcus sp. (strain CC9311).